The chain runs to 166 residues: Myosin regulatory light chain 2, ventricular/cardiac muscle isoform (166 aa).

The residue at position 2 (alanine 2) is a N,N,N-trimethylalanine. Asparagine 14 carries the post-translational modification Deamidated asparagine. The residue at position 15 (serine 15) is a Phosphoserine; by ZIPK/DAPK3. Serine 19 is subject to Phosphoserine. 3 EF-hand domains span residues 24 to 59 (TQIQ…LGRV), 94 to 129 (DPEE…QAER), and 130 to 165 (FSKE…GEEK). Ca(2+) is bound by residues aspartate 37, asparagine 39, aspartate 41, and aspartate 48. Residue threonine 52 is modified to Phosphothreonine.

As to quaternary structure, myosin is a hexamer of 2 heavy chains and 4 light chains. Interacts with MYOC. N-terminus is methylated by METTL11A/NTM1. Post-translationally, phosphorylated by MYLK3 and MYLK2; promotes cardiac muscle contraction and function. Dephosphorylated by PPP1CB complexed to PPP1R12B. The phosphorylated form in adult is expressed as gradients across the heart from endocardium (low phosphorylation) to epicardium (high phosphorylation); regulates cardiac torsion and workload distribution. Highly expressed in type I muscle fibers.

It localises to the cytoplasm. It is found in the myofibril. Its subcellular location is the sarcomere. The protein resides in the a band. Its function is as follows. Contractile protein that plays a role in heart development and function. Following phosphorylation, plays a role in cross-bridge cycling kinetics and cardiac muscle contraction by increasing myosin lever arm stiffness and promoting myosin head diffusion; as a consequence of the increase in maximum contraction force and calcium sensitivity of contraction force. These events altogether slow down myosin kinetics and prolong duty cycle resulting in accumulated myosins being cooperatively recruited to actin binding sites to sustain thin filament activation as a means to fine-tune myofilament calcium sensitivity to force. During cardiogenesis plays an early role in cardiac contractility by promoting cardiac myofibril assembly. In Homo sapiens (Human), this protein is Myosin regulatory light chain 2, ventricular/cardiac muscle isoform.